Reading from the N-terminus, the 205-residue chain is Max-like protein homolog 2 (205 aa).

2 stretches are compositionally biased toward low complexity: residues 1–12 (MSRSRSAAASSS) and 26–40 (SASSPSAPNTPATNS). The tract at residues 1–58 (MSRSRSAAASSSQKPDDMDLMSPDGSASSPSAPNTPATNSGGFSSDRKKATHLRCERQ) is disordered. Positions 45 to 58 (SDRKKATHLRCERQ) are enriched in basic and acidic residues. The interval 47–60 (RKKATHLRCERQRR) is basic motif. Residues 47–101 (RKKATHLRCERQRREAINSGYSDLKDLIPQTTTSLGCKTTNAAILFRACDFMSQL) form the bHLH domain. Residues 61–101 (EAINSGYSDLKDLIPQTTTSLGCKTTNAAILFRACDFMSQL) form a helix-loop-helix motif region. Residues 98-132 (MSQLKTDISDADKQLAQLNAQAAALEMIASEYEQM) adopt a coiled-coil conformation.

Widely expressed.

The protein resides in the nucleus. Its subcellular location is the cytoplasm. It is found in the mitochondrion. Transcription factor. Binds to the E box motif 5'-CACGTG-3', probably in a heterodimeric complex with mml-1. Involved in modulating longevity in response to TOR signaling, dietary restriction, the decline in protein homeostasis associated with normal aging, germline signaling and the insulin-like signaling pathway. Plays a role in autophagy. Involved in regulating migration of the ray 1 precursor cells in the male tail, acting in concert with Wnt and semaphorin signaling pathways. Regulates transcription of genes encoding extracellular matrix (ECM) components which may contribute to the substratum required for migration of the neighboring ray 1 precursor cells. Required for resistance to oxidative stress. Involved in promoting infection by the microsporidian pathogen N.parisii, probably acting independently of its canonical partner, mml-1. The protein is Max-like protein homolog 2 of Caenorhabditis elegans.